Reading from the N-terminus, the 402-residue chain is Formate-dependent phosphoribosylglycinamide formyltransferase (402 aa).

N(1)-(5-phospho-beta-D-ribosyl)glycinamide contacts are provided by residues 22–23 (EL) and Glu-82. ATP-binding positions include Arg-115, Lys-160, 165–170 (SSGKGQ), 200–203 (EGFV), and Glu-208. The region spanning 120-318 (RLAAETLGLP…EFELHARAIL (199 aa)) is the ATP-grasp domain. 2 residues coordinate Mg(2+): Glu-277 and Glu-289. Residues Asp-296, Lys-365, and 372-373 (RR) contribute to the N(1)-(5-phospho-beta-D-ribosyl)glycinamide site.

It belongs to the PurK/PurT family. In terms of assembly, homodimer.

The enzyme catalyses N(1)-(5-phospho-beta-D-ribosyl)glycinamide + formate + ATP = N(2)-formyl-N(1)-(5-phospho-beta-D-ribosyl)glycinamide + ADP + phosphate + H(+). Its pathway is purine metabolism; IMP biosynthesis via de novo pathway; N(2)-formyl-N(1)-(5-phospho-D-ribosyl)glycinamide from N(1)-(5-phospho-D-ribosyl)glycinamide (formate route): step 1/1. In terms of biological role, involved in the de novo purine biosynthesis. Catalyzes the transfer of formate to 5-phospho-ribosyl-glycinamide (GAR), producing 5-phospho-ribosyl-N-formylglycinamide (FGAR). Formate is provided by PurU via hydrolysis of 10-formyl-tetrahydrofolate. The protein is Formate-dependent phosphoribosylglycinamide formyltransferase of Mycobacteroides abscessus (strain ATCC 19977 / DSM 44196 / CCUG 20993 / CIP 104536 / JCM 13569 / NCTC 13031 / TMC 1543 / L948) (Mycobacterium abscessus).